We begin with the raw amino-acid sequence, 213 residues long: Protein Flattop (213 aa).

The disordered stretch occupies residues 127–213 (VDQPAEQSKI…HNSRPASQEK (87 aa)). A compositionally biased stretch (polar residues) spans 151–213 (QHIQDQSRPA…HNSRPASQEK (63 aa)).

This sequence belongs to the Flattop family.

The protein localises to the cytoplasm. The protein resides in the cytoskeleton. It is found in the cilium basal body. Its subcellular location is the cell projection. It localises to the cilium. The protein localises to the apical cell membrane. The protein resides in the cilium axoneme. In terms of biological role, microtubule inner protein (MIP) part of the dynein-decorated doublet microtubules (DMTs) in cilia axoneme. Acts as a regulator of cilium basal body docking and positioning in mono- and multiciliated cells. Regulates basal body docking and cilia formation in multiciliated lung cells. Regulates kinocilium positioning and stereocilia bundle morphogenesis in the inner ear. This Danio rerio (Zebrafish) protein is Protein Flattop.